The chain runs to 271 residues: MEFWQNIYVNFDVVAFEIFGLKVHWYGIMYVLALLVALMVAKYYAIKDNMGISKAMLDSYFIWVEIGVILGARIGYILIYDAHTLWYLTHPWQIFNPFYNGEFVGIRGMSYHGAVVGFLIATYAFCKKNKQNLWKYLDLVAISVPCGYIFGRIGNFLNQELFGRATEVPWGIYVDGILRHPSQLYEAFLEGFIVFIILLLIKKYKKYNGELIAYYTILYALARFVCEFFREPDFGIGFVAFGMSMGQILSLLMFLLGLFLSFYLRNIKKNL.

7 helical membrane-spanning segments follow: residues 18–38 (IFGL…LVAL), 60–80 (YFIW…ILIY), 103–123 (FVGI…IATY), 137–157 (LDLV…GNFL), 181–201 (PSQL…LLLI), 209–229 (GELI…CEFF), and 236–256 (IGFV…MFLL). Arg152 lines the a 1,2-diacyl-sn-glycero-3-phospho-(1'-sn-glycerol) pocket.

The protein belongs to the Lgt family.

It localises to the cell inner membrane. The enzyme catalyses L-cysteinyl-[prolipoprotein] + a 1,2-diacyl-sn-glycero-3-phospho-(1'-sn-glycerol) = an S-1,2-diacyl-sn-glyceryl-L-cysteinyl-[prolipoprotein] + sn-glycerol 1-phosphate + H(+). It functions in the pathway protein modification; lipoprotein biosynthesis (diacylglyceryl transfer). In terms of biological role, catalyzes the transfer of the diacylglyceryl group from phosphatidylglycerol to the sulfhydryl group of the N-terminal cysteine of a prolipoprotein, the first step in the formation of mature lipoproteins. The protein is Phosphatidylglycerol--prolipoprotein diacylglyceryl transferase of Campylobacter lari (strain RM2100 / D67 / ATCC BAA-1060).